Here is a 302-residue protein sequence, read N- to C-terminus: Sulfate adenylyltransferase subunit 2 (302 aa).

The protein belongs to the PAPS reductase family. CysD subfamily. As to quaternary structure, heterodimer composed of CysD, the smaller subunit, and CysN.

The catalysed reaction is sulfate + ATP + H(+) = adenosine 5'-phosphosulfate + diphosphate. It functions in the pathway sulfur metabolism; hydrogen sulfide biosynthesis; sulfite from sulfate: step 1/3. Its function is as follows. With CysN forms the ATP sulfurylase (ATPS) that catalyzes the adenylation of sulfate producing adenosine 5'-phosphosulfate (APS) and diphosphate, the first enzymatic step in sulfur assimilation pathway. APS synthesis involves the formation of a high-energy phosphoric-sulfuric acid anhydride bond driven by GTP hydrolysis by CysN coupled to ATP hydrolysis by CysD. This is Sulfate adenylyltransferase subunit 2 from Photorhabdus laumondii subsp. laumondii (strain DSM 15139 / CIP 105565 / TT01) (Photorhabdus luminescens subsp. laumondii).